Here is a 413-residue protein sequence, read N- to C-terminus: Imidazolonepropionase (413 aa).

The Fe(3+) site is built by histidine 77 and histidine 79. 2 residues coordinate Zn(2+): histidine 77 and histidine 79. 4-imidazolone-5-propanoate contacts are provided by arginine 86, tyrosine 149, and histidine 182. Tyrosine 149 is an N-formimidoyl-L-glutamate binding site. Histidine 247 is a binding site for Fe(3+). Histidine 247 is a binding site for Zn(2+). Glutamine 250 contributes to the 4-imidazolone-5-propanoate binding site. Residue aspartate 322 coordinates Fe(3+). Aspartate 322 serves as a coordination point for Zn(2+). Asparagine 324 and glycine 326 together coordinate N-formimidoyl-L-glutamate. Threonine 327 is a binding site for 4-imidazolone-5-propanoate.

This sequence belongs to the metallo-dependent hydrolases superfamily. HutI family. Zn(2+) is required as a cofactor. The cofactor is Fe(3+).

The protein resides in the cytoplasm. The enzyme catalyses 4-imidazolone-5-propanoate + H2O = N-formimidoyl-L-glutamate. It participates in amino-acid degradation; L-histidine degradation into L-glutamate; N-formimidoyl-L-glutamate from L-histidine: step 3/3. Its function is as follows. Catalyzes the hydrolytic cleavage of the carbon-nitrogen bond in imidazolone-5-propanoate to yield N-formimidoyl-L-glutamate. It is the third step in the universal histidine degradation pathway. The chain is Imidazolonepropionase from Chromobacterium violaceum (strain ATCC 12472 / DSM 30191 / JCM 1249 / CCUG 213 / NBRC 12614 / NCIMB 9131 / NCTC 9757 / MK).